Reading from the N-terminus, the 654-residue chain is MTDRIVPATLVFREDGTVVSPLYGDIYHSAAGALAQADHVFIRGNDLPERWRHKRTFTIVETGFGTGCNFLATWAAWRADPSHCERLHFVSVEKHPFARDDLRRAAAHIVAYTTIEPLVDALANAWPALTPGVHRLEFDEGRVTLTLAFGDALDVLPNLALRADAFYLDGFAPSKNADLWSPAIFKSLAKLADEHATFATYTSSGAVKRALDEAGFAYRKVEGFAGKRAMLVGEFAPRWRVRRHEPPRALDVGTRDAIVIGAGLAGCAAVERLAARGWHVTLIERRERIASEASGNPAGVFHPMIARDDNLAARLSRAGFLHALNRWRALEHAGHTFARSAHGLVQLATSADEFELMRESVDTLGVPSELARTLSRDDAQALLRTDIAHGGWLFPQGGSISPAALAAAQCAAAGDRLSRIAGVEVARLERGGDGRWLALDASGATIAQASVVIVANAADAARVAGLRHAPTQRVRGQLTLLPPGSAPAVPLPAIGDGYVVPLANGVTLTGATYEPDDADTTLREAGHRENLERLERLLPAFSAHALDAHALAGRVGFRCVASDRLPLVGELGDEAAAARDAAALTGARLRDVPRAAGLYGAFGYGSRGLVWAALGAELIAAQIEGEPWPLERELAEAIDPARFLIRALRRGRVA.

A tRNA (mnm(5)s(2)U34)-methyltransferase region spans residues 1-236 (MTDRIVPATL…KRAMLVGEFA (236 aa)). The FAD-dependent cmnm(5)s(2)U34 oxidoreductase stretch occupies residues 260-654 (IGAGLAGCAA…IRALRRGRVA (395 aa)).

In the N-terminal section; belongs to the methyltransferase superfamily. tRNA (mnm(5)s(2)U34)-methyltransferase family. This sequence in the C-terminal section; belongs to the DAO family. The cofactor is FAD.

It is found in the cytoplasm. The catalysed reaction is 5-aminomethyl-2-thiouridine(34) in tRNA + S-adenosyl-L-methionine = 5-methylaminomethyl-2-thiouridine(34) in tRNA + S-adenosyl-L-homocysteine + H(+). Catalyzes the last two steps in the biosynthesis of 5-methylaminomethyl-2-thiouridine (mnm(5)s(2)U) at the wobble position (U34) in tRNA. Catalyzes the FAD-dependent demodification of cmnm(5)s(2)U34 to nm(5)s(2)U34, followed by the transfer of a methyl group from S-adenosyl-L-methionine to nm(5)s(2)U34, to form mnm(5)s(2)U34. This is tRNA 5-methylaminomethyl-2-thiouridine biosynthesis bifunctional protein MnmC from Burkholderia thailandensis (strain ATCC 700388 / DSM 13276 / CCUG 48851 / CIP 106301 / E264).